We begin with the raw amino-acid sequence, 361 residues long: DNA replication and repair protein RecF (361 aa).

Residue Gly30–Thr37 participates in ATP binding.

It belongs to the RecF family.

Its subcellular location is the cytoplasm. Functionally, the RecF protein is involved in DNA metabolism; it is required for DNA replication and normal SOS inducibility. RecF binds preferentially to single-stranded, linear DNA. It also seems to bind ATP. This chain is DNA replication and repair protein RecF, found in Clostridium perfringens (strain ATCC 13124 / DSM 756 / JCM 1290 / NCIMB 6125 / NCTC 8237 / Type A).